Here is a 361-residue protein sequence, read N- to C-terminus: Histidinol-phosphate aminotransferase (361 aa).

The residue at position 219 (K219) is an N6-(pyridoxal phosphate)lysine.

This sequence belongs to the class-II pyridoxal-phosphate-dependent aminotransferase family. Histidinol-phosphate aminotransferase subfamily. Homodimer. Requires pyridoxal 5'-phosphate as cofactor.

It catalyses the reaction L-histidinol phosphate + 2-oxoglutarate = 3-(imidazol-4-yl)-2-oxopropyl phosphate + L-glutamate. The protein operates within amino-acid biosynthesis; L-histidine biosynthesis; L-histidine from 5-phospho-alpha-D-ribose 1-diphosphate: step 7/9. The sequence is that of Histidinol-phosphate aminotransferase from Acinetobacter baumannii (strain ACICU).